The sequence spans 375 residues: F-box/kelch-repeat protein At4g39580 (375 aa).

Positions 20–66 constitute an F-box domain; it reads PTTNLFLPDDILLSSLSRISRLYYPTFSLVSKSFRSLIASPELYQTR. Kelch repeat units follow at residues 132-178, 179-225, and 229-269; these read NIYA…VLDG, KIYV…KSVG, and KYHL…VINN.

The polypeptide is F-box/kelch-repeat protein At4g39580 (Arabidopsis thaliana (Mouse-ear cress)).